The chain runs to 247 residues: Carboxy-S-adenosyl-L-methionine synthase (247 aa).

Residues Tyr39, 64–66 (GCS), 89–90 (DN), 117–118 (DI), Asn132, and Arg199 each bind S-adenosyl-L-methionine.

This sequence belongs to the class I-like SAM-binding methyltransferase superfamily. Cx-SAM synthase family. Homodimer.

It carries out the reaction prephenate + S-adenosyl-L-methionine = carboxy-S-adenosyl-L-methionine + 3-phenylpyruvate + H2O. Functionally, catalyzes the conversion of S-adenosyl-L-methionine (SAM) to carboxy-S-adenosyl-L-methionine (Cx-SAM). In Shigella sonnei (strain Ss046), this protein is Carboxy-S-adenosyl-L-methionine synthase.